The primary structure comprises 200 residues: Recombination protein RecR (200 aa).

Residues 59–74 (CSTCGSLDTQDPCAIC) form a C4-type zinc finger. The region spanning 82-177 (SLICVVEEVG…TVSMLARGVP (96 aa)) is the Toprim domain.

Belongs to the RecR family.

Functionally, may play a role in DNA repair. It seems to be involved in an RecBC-independent recombinational process of DNA repair. It may act with RecF and RecO. The chain is Recombination protein RecR from Phenylobacterium zucineum (strain HLK1).